The chain runs to 146 residues: Small RNA-binding protein 11, chloroplastic (146 aa).

Residues 1 to 31 (MAALARIGGRHLKSVCLINSSASCFFTQRRG) constitute a chloroplast transit peptide. In terms of domain architecture, RRM spans 34–112 (SKLFIGGLSF…RTIFVDYAKA (79 aa)). The residue at position 42 (S42) is a Phosphoserine.

As to expression, expressed in rosette leaves, cauline leaves, stems and flowers.

Its subcellular location is the plastid. The protein resides in the chloroplast. In terms of biological role, probable RNA-binding protein that may be involved in salt and oxidative stress tolerance. This chain is Small RNA-binding protein 11, chloroplastic, found in Arabidopsis thaliana (Mouse-ear cress).